A 225-amino-acid polypeptide reads, in one-letter code: Probable methylthioribulose-1-phosphate dehydratase (225 aa).

Position 86 (C86) interacts with substrate. Zn(2+)-binding residues include H104 and H106. E127 functions as the Proton donor/acceptor in the catalytic mechanism. H183 is a binding site for Zn(2+).

It belongs to the aldolase class II family. MtnB subfamily. Zn(2+) serves as cofactor.

It localises to the cytoplasm. It catalyses the reaction 5-(methylsulfanyl)-D-ribulose 1-phosphate = 5-methylsulfanyl-2,3-dioxopentyl phosphate + H2O. Its pathway is amino-acid biosynthesis; L-methionine biosynthesis via salvage pathway; L-methionine from S-methyl-5-thio-alpha-D-ribose 1-phosphate: step 2/6. Functionally, catalyzes the dehydration of methylthioribulose-1-phosphate (MTRu-1-P) into 2,3-diketo-5-methylthiopentyl-1-phosphate (DK-MTP-1-P). The chain is Probable methylthioribulose-1-phosphate dehydratase from Leishmania infantum.